Here is a 430-residue protein sequence, read N- to C-terminus: Bifunctional protein GlmU (430 aa).

Positions 1–223 are pyrophosphorylase; the sequence is MSISVVILAA…EEEFKGVNSK (223 aa). Residues 8–11, K22, and 81–82 contribute to the UDP-N-acetyl-alpha-D-glucosamine site; these read LAAG and GT. D102 is a binding site for Mg(2+). Positions 135, 149, 164, and 221 each coordinate UDP-N-acetyl-alpha-D-glucosamine. N221 contacts Mg(2+). The linker stretch occupies residues 224–244; sequence LDLARAEEIMQRRIKEALMMA. An N-acetyltransferase region spans residues 245–430; sequence GVTMCLPETI…NFFYKFFGDK (186 aa). 2 residues coordinate UDP-N-acetyl-alpha-D-glucosamine: R308 and K325. The Proton acceptor role is filled by H336. UDP-N-acetyl-alpha-D-glucosamine is bound by residues Y339 and N350. Residues A353, 359–360, S378, A396, and R413 contribute to the acetyl-CoA site; that span reads NY.

The protein in the N-terminal section; belongs to the N-acetylglucosamine-1-phosphate uridyltransferase family. It in the C-terminal section; belongs to the transferase hexapeptide repeat family. Homotrimer. Mg(2+) serves as cofactor.

It is found in the cytoplasm. It carries out the reaction alpha-D-glucosamine 1-phosphate + acetyl-CoA = N-acetyl-alpha-D-glucosamine 1-phosphate + CoA + H(+). It catalyses the reaction N-acetyl-alpha-D-glucosamine 1-phosphate + UTP + H(+) = UDP-N-acetyl-alpha-D-glucosamine + diphosphate. It functions in the pathway nucleotide-sugar biosynthesis; UDP-N-acetyl-alpha-D-glucosamine biosynthesis; N-acetyl-alpha-D-glucosamine 1-phosphate from alpha-D-glucosamine 6-phosphate (route II): step 2/2. It participates in nucleotide-sugar biosynthesis; UDP-N-acetyl-alpha-D-glucosamine biosynthesis; UDP-N-acetyl-alpha-D-glucosamine from N-acetyl-alpha-D-glucosamine 1-phosphate: step 1/1. Its pathway is bacterial outer membrane biogenesis; LPS lipid A biosynthesis. In terms of biological role, catalyzes the last two sequential reactions in the de novo biosynthetic pathway for UDP-N-acetylglucosamine (UDP-GlcNAc). The C-terminal domain catalyzes the transfer of acetyl group from acetyl coenzyme A to glucosamine-1-phosphate (GlcN-1-P) to produce N-acetylglucosamine-1-phosphate (GlcNAc-1-P), which is converted into UDP-GlcNAc by the transfer of uridine 5-monophosphate (from uridine 5-triphosphate), a reaction catalyzed by the N-terminal domain. The polypeptide is Bifunctional protein GlmU (Sulfurovum sp. (strain NBC37-1)).